A 730-amino-acid polypeptide reads, in one-letter code: MVMLARSKLALDVSRRSQSLQRICYYASLSSRFSGGGGDDGGGSSPEIGGTDSANEWEKLLKPFDLDSLRNSFHKITPFQLYKLLELPLNVSTSMELFSWTGSQNGYRHSFDVYQVLIGKLGANGEFKTIDRLLIQMKDEGIVFKESLFISIMRDYDKAGFPGQTTRLMLEMRNVYSCEPTFKSYNVVLEILVSGNCHKVAANVFYDMLSRKIPPTLFTFGVVMKAFCAVNEIDSALSLLRDMTKHGCVPNSVIYQTLIHSLSKCNRVNEALQLLEEMFLMGCVPDAETFNDVILGLCKFDRINEAAKMVNRMLIRGFAPDDITYGYLMNGLCKIGRVDAAKDLFYRIPKPEIVIFNTLIHGFVTHGRLDDAKAVLSDMVTSYGIVPDVCTYNSLIYGYWKEGLVGLALEVLHDMRNKGCKPNVYSYTILVDGFCKLGKIDEAYNVLNEMSADGLKPNTVGFNCLISAFCKEHRIPEAVEIFREMPRKGCKPDVYTFNSLISGLCEVDEIKHALWLLRDMISEGVVANTVTYNTLINAFLRRGEIKEARKLVNEMVFQGSPLDEITYNSLIKGLCRAGEVDKARSLFEKMLRDGHAPSNISCNILINGLCRSGMVEEAVEFQKEMVLRGSTPDIVTFNSLINGLCRAGRIEDGLTMFRKLQAEGIPPDTVTFNTLMSWLCKGGFVYDACLLLDEGIEDGFVPNHRTWSILLQSIIPQETLDRRRFYNAAF.

The transit peptide at 1 to 18 directs the protein to the mitochondrion; that stretch reads MVMLARSKLALDVSRRSQ. PPR repeat units lie at residues 110–144, 145–175, 181–215, 216–250, 251–285, 286–320, 321–351, 352–387, 388–422, 423–457, 458–492, 493–527, 528–562, 563–597, 598–632, 633–667, and 668–702; these read SFDV…GIVF, KESL…MRNV, TFKS…KIPP, TLFT…GCVP, NSVI…GCVP, DAET…GFAP, DDIT…IPKP, EIVI…GIVP, DVCT…GCKP, NVYS…GLKP, NTVG…GCKP, DVYT…GVVA, NTVT…GSPL, DEIT…GHAP, SNIS…GSTP, DIVT…GIPP, and DTVT…GFVP.

The protein belongs to the PPR family. P subfamily.

It is found in the mitochondrion. The polypeptide is Pentatricopeptide repeat-containing protein At5g64320, mitochondrial (Arabidopsis thaliana (Mouse-ear cress)).